We begin with the raw amino-acid sequence, 503 residues long: Probable cytosol aminopeptidase (503 aa).

Mn(2+) contacts are provided by lysine 270 and aspartate 275. The active site involves lysine 282. Mn(2+) is bound by residues aspartate 293, aspartate 352, and glutamate 354. The active site involves arginine 356.

It belongs to the peptidase M17 family. It depends on Mn(2+) as a cofactor.

The protein localises to the cytoplasm. It carries out the reaction Release of an N-terminal amino acid, Xaa-|-Yaa-, in which Xaa is preferably Leu, but may be other amino acids including Pro although not Arg or Lys, and Yaa may be Pro. Amino acid amides and methyl esters are also readily hydrolyzed, but rates on arylamides are exceedingly low.. The catalysed reaction is Release of an N-terminal amino acid, preferentially leucine, but not glutamic or aspartic acids.. Functionally, presumably involved in the processing and regular turnover of intracellular proteins. Catalyzes the removal of unsubstituted N-terminal amino acids from various peptides. This Salmonella arizonae (strain ATCC BAA-731 / CDC346-86 / RSK2980) protein is Probable cytosol aminopeptidase.